A 478-amino-acid polypeptide reads, in one-letter code: Adenosylhomocysteinase (478 aa).

Positions 57, 139, and 201 each coordinate substrate. 202 to 204 (TTT) provides a ligand contact to NAD(+). Lysine 231 and aspartate 235 together coordinate substrate. NAD(+) is bound by residues asparagine 236, 265-270 (GYGDVG), glutamate 288, asparagine 323, 344-346 (IGH), and asparagine 392.

Belongs to the adenosylhomocysteinase family. The cofactor is NAD(+).

It is found in the cytoplasm. It catalyses the reaction S-adenosyl-L-homocysteine + H2O = L-homocysteine + adenosine. Its pathway is amino-acid biosynthesis; L-homocysteine biosynthesis; L-homocysteine from S-adenosyl-L-homocysteine: step 1/1. Functionally, may play a key role in the regulation of the intracellular concentration of adenosylhomocysteine. The polypeptide is Adenosylhomocysteinase (Corynebacterium glutamicum (strain R)).